The chain runs to 349 residues: GTP 3',8-cyclase (349 aa).

A Radical SAM core domain is found at 24 to 250 (PFGRAVTYLR…DIPYRTGGPA (227 aa)). Arg-33 serves as a coordination point for GTP. [4Fe-4S] cluster is bound by residues Cys-40 and Cys-44. Tyr-46 is a binding site for S-adenosyl-L-methionine. A [4Fe-4S] cluster-binding site is contributed by Cys-47. Residue Arg-82 participates in GTP binding. Gly-86 serves as a coordination point for S-adenosyl-L-methionine. Thr-116 serves as a coordination point for GTP. Position 140 (Ser-140) interacts with S-adenosyl-L-methionine. GTP is bound at residue Lys-176. Residue Met-210 participates in S-adenosyl-L-methionine binding. Residues Cys-273 and Cys-276 each coordinate [4Fe-4S] cluster. GTP is bound at residue 278 to 280 (RVR). Cys-290 is a [4Fe-4S] cluster binding site.

This sequence belongs to the radical SAM superfamily. MoaA family. As to quaternary structure, monomer and homodimer. [4Fe-4S] cluster serves as cofactor.

The enzyme catalyses GTP + AH2 + S-adenosyl-L-methionine = (8S)-3',8-cyclo-7,8-dihydroguanosine 5'-triphosphate + 5'-deoxyadenosine + L-methionine + A + H(+). The protein operates within cofactor biosynthesis; molybdopterin biosynthesis. Functionally, catalyzes the cyclization of GTP to (8S)-3',8-cyclo-7,8-dihydroguanosine 5'-triphosphate. The protein is GTP 3',8-cyclase of Rhizobium meliloti (strain 1021) (Ensifer meliloti).